Here is a 657-residue protein sequence, read N- to C-terminus: Translation factor GUF1, mitochondrial (657 aa).

The N-terminal 39 residues, 1 to 39 (MRGCLQSVKWLTSAVRQSQSLTSSTRFPRRLFNTSTLHY), are a transit peptide targeting the mitochondrion. Positions 59-239 (ERFRNFCIVA…TVIEQVPAPV (181 aa)) constitute a tr-type G domain. Residues 68–75 (AHVDHGKS), 132–136 (DTPGH), and 186–189 (NKVD) contribute to the GTP site.

This sequence belongs to the TRAFAC class translation factor GTPase superfamily. Classic translation factor GTPase family. LepA subfamily.

It localises to the mitochondrion inner membrane. The enzyme catalyses GTP + H2O = GDP + phosphate + H(+). Promotes mitochondrial protein synthesis. May act as a fidelity factor of the translation reaction, by catalyzing a one-codon backward translocation of tRNAs on improperly translocated ribosomes. Binds to mitochondrial ribosomes in a GTP-dependent manner. The polypeptide is Translation factor GUF1, mitochondrial (Blastomyces gilchristii (strain SLH14081) (Blastomyces dermatitidis)).